We begin with the raw amino-acid sequence, 277 residues long: Large ribosomal subunit protein uL2 (277 aa).

Residues Gly222 to Lys258 are disordered.

The protein belongs to the universal ribosomal protein uL2 family. As to quaternary structure, part of the 50S ribosomal subunit. Forms a bridge to the 30S subunit in the 70S ribosome.

Functionally, one of the primary rRNA binding proteins. Required for association of the 30S and 50S subunits to form the 70S ribosome, for tRNA binding and peptide bond formation. It has been suggested to have peptidyltransferase activity; this is somewhat controversial. Makes several contacts with the 16S rRNA in the 70S ribosome. The protein is Large ribosomal subunit protein uL2 of Clostridium perfringens (strain 13 / Type A).